A 216-amino-acid chain; its full sequence is Small ribosomal subunit protein uS3 (216 aa).

The KH type-2 domain maps to 39-111 (IYKFFDKLVR…DINLQVSLLK (73 aa)).

Belongs to the universal ribosomal protein uS3 family. As to quaternary structure, part of the 30S ribosomal subunit. Forms a tight complex with proteins S10 and S14.

Its function is as follows. Binds the lower part of the 30S subunit head. Binds mRNA in the 70S ribosome, positioning it for translation. This Mycoplasmopsis agalactiae (strain NCTC 10123 / CIP 59.7 / PG2) (Mycoplasma agalactiae) protein is Small ribosomal subunit protein uS3.